A 95-amino-acid polypeptide reads, in one-letter code: PIK3R3 upstream open reading frame protein (95 aa).

Positions 1–27 (MGPSRLVRGPRPQGMRSPYRRPGMGWP) are disordered.

In Homo sapiens (Human), this protein is PIK3R3 upstream open reading frame protein.